The chain runs to 222 residues: MGKLIIVGTPIGNLEDITIRALKTLREVDLILAEDTRRTMVLLNKYRIKKPLLSFNERNSKKRIKEILPLLKEGKKVAIVSDAGMPVISDPGYNLVEECWREGIEVDIVPGPSALTSAVAVSGFPGSKFIFEGFLPRGKNRRRLLKSLKKENRVIVFFESPERLLSTLRDILEIIGDREVFIAREMTKLHQEFFRGKVSEAISHFEKKKPLGEITVVLSGKE.

This sequence belongs to the methyltransferase superfamily. RsmI family.

Its subcellular location is the cytoplasm. The catalysed reaction is cytidine(1402) in 16S rRNA + S-adenosyl-L-methionine = 2'-O-methylcytidine(1402) in 16S rRNA + S-adenosyl-L-homocysteine + H(+). In terms of biological role, catalyzes the 2'-O-methylation of the ribose of cytidine 1402 (C1402) in 16S rRNA. In Thermotoga maritima (strain ATCC 43589 / DSM 3109 / JCM 10099 / NBRC 100826 / MSB8), this protein is Ribosomal RNA small subunit methyltransferase I.